The primary structure comprises 387 residues: Sharpin (387 aa).

Residues 1-180 (MAPPAGGAAA…EREELAGSLA (180 aa)) form a self-association region. Polar residues predominate over residues 122-132 (EGQNGSKSNSP). The disordered stretch occupies residues 122–169 (EGQNGSKSNSPPALGPEACPVSLPSPPEASTLKGPPPEADLPRSPGNL). Serine 165 is modified (phosphoserine). An interaction with SHANK1 region spans residues 175 to 310 (LAGSLARAIA…SAPREAPATG (136 aa)). One can recognise a Ubiquitin-like domain in the interval 219–288 (IRLQVTLEDA…PERSLASYGV (70 aa)). The interval 305–349 (EAPATGPSPQHPQKMDGELGRLFPPSLGLPPGPQPAASSLPSPLQ) is disordered. At serine 312 the chain carries Phosphoserine. Positions 339 to 349 (PAASSLPSPLQ) are enriched in low complexity. A RanBP2-type zinc finger spans residues 348 to 377 (LQPSWSCPSCTFINAPDRPGCEMCSTQRPC).

In terms of assembly, monomer and homodimer. Component of the LUBAC complex (linear ubiquitin chain assembly complex) which consists of SHARPIN, RBCK1 and RNF31. LUBAC has a MW of approximately 600 kDa suggesting a heteromultimeric assembly of its subunits. Associates with the TNF-R1 signaling complex (TNF-RSC) in a stimulation-dependent manner. Interacts with EYA1, EYA2, SHANK1 and SHANK3 (via ANK repeats). As to expression, highly expressed in skeletal muscle and placenta and at lower levels in brain, heart, colon without mucosa, thymus, spleen, kidney, liver, small intestine, lung and peripheral blood leukocytes. Up-regulated in various tumor tissues such as kidney, liver, ovary and pancreas tumors.

The protein resides in the cytoplasm. Its subcellular location is the cytosol. The protein localises to the synapse. The protein operates within protein modification; protein ubiquitination. Its function is as follows. Component of the LUBAC complex which conjugates linear polyubiquitin chains in a head-to-tail manner to substrates and plays a key role in NF-kappa-B activation and regulation of inflammation. LUBAC conjugates linear polyubiquitin to IKBKG and RIPK1 and is involved in activation of the canonical NF-kappa-B and the JNK signaling pathways. Linear ubiquitination mediated by the LUBAC complex interferes with TNF-induced cell death and thereby prevents inflammation. LUBAC is recruited to the TNF-R1 signaling complex (TNF-RSC) following polyubiquitination of TNF-RSC components by BIRC2 and/or BIRC3 and to conjugate linear polyubiquitin to IKBKG and possibly other components contributing to the stability of the complex. The LUBAC complex is also involved in innate immunity by conjugating linear polyubiquitin chains at the surface of bacteria invading the cytosol to form the ubiquitin coat surrounding bacteria. LUBAC is not able to initiate formation of the bacterial ubiquitin coat, and can only promote formation of linear polyubiquitins on pre-existing ubiquitin. The bacterial ubiquitin coat acts as an 'eat-me' signal for xenophagy and promotes NF-kappa-B activation. Together with OTULIN, the LUBAC complex regulates the canonical Wnt signaling during angiogenesis. This Homo sapiens (Human) protein is Sharpin.